A 154-amino-acid polypeptide reads, in one-letter code: Protein disulfide-isomerase LQY1, chloroplastic (154 aa).

The N-terminal 43 residues, 1–43 (MPVSAPSPPRLHSPFIHCPINFTPSSFSARNLRSPSTSYPRIK), are a transit peptide targeting the chloroplast. A helical membrane pass occupies residues 51 to 71 (VVAISVGVASVALGIGIPVFY). A CR-type zinc finger spans residues 77-147 (NAAKRENTQP…SGVQPRYLDR (71 aa)). Cysteine 87, cysteine 90, cysteine 98, cysteine 101, cysteine 121, cysteine 124, cysteine 132, and cysteine 135 together coordinate Zn(2+).

It belongs to the BSD2 chaperone family. In terms of assembly, interacts with the photosystem II core subunits. Interacts with HHL1. It depends on Zn(2+) as a cofactor.

The protein resides in the plastid. It localises to the chloroplast thylakoid membrane. It carries out the reaction Catalyzes the rearrangement of -S-S- bonds in proteins.. In terms of biological role, protein disulfide-isomerase probably involved upon formation of a complex with HHL1 in maintaining photosystem II (PSII) activity under high light by regulating repair and reassembly of PSII complexes. This chain is Protein disulfide-isomerase LQY1, chloroplastic, found in Arabidopsis thaliana (Mouse-ear cress).